The sequence spans 464 residues: Tyrosine--tRNA ligase, mitochondrial (464 aa).

An L-tyrosine-binding site is contributed by Tyr-61. ATP is bound at residue Asp-65. The 'HIGH' region signature appears at 66-75; sequence PTADSLHVGN. Residues Asp-105, Tyr-209, Gln-213, Asp-216, and Gln-235 each contribute to the L-tyrosine site. A 'KMSKS' region motif is present at residues 270-274; that stretch reads KFGKS. Lys-273 contacts ATP.

Belongs to the class-I aminoacyl-tRNA synthetase family. In terms of assembly, homodimer.

The protein resides in the mitochondrion matrix. It carries out the reaction tRNA(Tyr) + L-tyrosine + ATP = L-tyrosyl-tRNA(Tyr) + AMP + diphosphate + H(+). In terms of biological role, catalyzes the attachment of tyrosine to tRNA(Tyr) in a two-step reaction: tyrosine is first activated by ATP to form Tyr-AMP and then transferred to the acceptor end of tRNA(Tyr). The chain is Tyrosine--tRNA ligase, mitochondrial from Drosophila melanogaster (Fruit fly).